The chain runs to 557 residues: Dihydroxy-acid dehydratase (557 aa).

Asp-78 contributes to the Mg(2+) binding site. Cys-119 contributes to the [2Fe-2S] cluster binding site. Positions 120 and 121 each coordinate Mg(2+). Lys-121 carries the post-translational modification N6-carboxylysine. Residue Cys-191 participates in [2Fe-2S] cluster binding. Position 442 (Glu-442) interacts with Mg(2+). The active-site Proton acceptor is the Ser-468.

This sequence belongs to the IlvD/Edd family. As to quaternary structure, homodimer. The cofactor is [2Fe-2S] cluster. Mg(2+) serves as cofactor.

It catalyses the reaction (2R)-2,3-dihydroxy-3-methylbutanoate = 3-methyl-2-oxobutanoate + H2O. The catalysed reaction is (2R,3R)-2,3-dihydroxy-3-methylpentanoate = (S)-3-methyl-2-oxopentanoate + H2O. It participates in amino-acid biosynthesis; L-isoleucine biosynthesis; L-isoleucine from 2-oxobutanoate: step 3/4. Its pathway is amino-acid biosynthesis; L-valine biosynthesis; L-valine from pyruvate: step 3/4. Functionally, functions in the biosynthesis of branched-chain amino acids. Catalyzes the dehydration of (2R,3R)-2,3-dihydroxy-3-methylpentanoate (2,3-dihydroxy-3-methylvalerate) into 2-oxo-3-methylpentanoate (2-oxo-3-methylvalerate) and of (2R)-2,3-dihydroxy-3-methylbutanoate (2,3-dihydroxyisovalerate) into 2-oxo-3-methylbutanoate (2-oxoisovalerate), the penultimate precursor to L-isoleucine and L-valine, respectively. In Syntrophobacter fumaroxidans (strain DSM 10017 / MPOB), this protein is Dihydroxy-acid dehydratase.